A 904-amino-acid polypeptide reads, in one-letter code: Alanine--tRNA ligase (904 aa).

Residues H600, H604, C704, and H708 each contribute to the Zn(2+) site.

This sequence belongs to the class-II aminoacyl-tRNA synthetase family. It depends on Zn(2+) as a cofactor.

Its subcellular location is the cytoplasm. It carries out the reaction tRNA(Ala) + L-alanine + ATP = L-alanyl-tRNA(Ala) + AMP + diphosphate. Functionally, catalyzes the attachment of alanine to tRNA(Ala) in a two-step reaction: alanine is first activated by ATP to form Ala-AMP and then transferred to the acceptor end of tRNA(Ala). Also edits incorrectly charged Ser-tRNA(Ala) and Gly-tRNA(Ala) via its editing domain. The protein is Alanine--tRNA ligase of Metallosphaera sedula (strain ATCC 51363 / DSM 5348 / JCM 9185 / NBRC 15509 / TH2).